The chain runs to 732 residues: Outer envelope protein 80, chloroplastic (732 aa).

Disordered stretches follow at residues 1-23 (MHCHNDDVRFSSSSIRIHSPSPK) and 135-154 (ESTQSVEGKDTVQQQKGHSV). The span at 11–20 (SSSSIRIHSP) shows a compositional bias: low complexity. In terms of domain architecture, POTRA spans 314-396 (AEVNNISIRF…VDLIMNCVER (83 aa)).

Belongs to the OEP80 (TC 1.B.33.2) family.

The protein resides in the plastid. The protein localises to the chloroplast outer membrane. Its function is as follows. Plays an essential role during early stages of plastid development. The polypeptide is Outer envelope protein 80, chloroplastic (OEP80) (Arabidopsis thaliana (Mouse-ear cress)).